A 131-amino-acid polypeptide reads, in one-letter code: Small ribosomal subunit protein uS11 (131 aa).

This sequence belongs to the universal ribosomal protein uS11 family. Part of the 30S ribosomal subunit. Interacts with proteins S7 and S18. Binds to IF-3.

Located on the platform of the 30S subunit, it bridges several disparate RNA helices of the 16S rRNA. Forms part of the Shine-Dalgarno cleft in the 70S ribosome. This Paramagnetospirillum magneticum (strain ATCC 700264 / AMB-1) (Magnetospirillum magneticum) protein is Small ribosomal subunit protein uS11.